We begin with the raw amino-acid sequence, 130 residues long: DNA-directed RNA polymerase subunit omega (130 aa).

The interval 109–130 (EEELLKGLEGLAPPEEQPEEDE) is disordered.

Belongs to the RNA polymerase subunit omega family. In terms of assembly, the RNAP catalytic core consists of 2 alpha, 1 beta, 1 beta' and 1 omega subunit. When a sigma factor is associated with the core the holoenzyme is formed, which can initiate transcription.

The enzyme catalyses RNA(n) + a ribonucleoside 5'-triphosphate = RNA(n+1) + diphosphate. In terms of biological role, promotes RNA polymerase assembly. Latches the N- and C-terminal regions of the beta' subunit thereby facilitating its interaction with the beta and alpha subunits. This Rhodopseudomonas palustris (strain BisB5) protein is DNA-directed RNA polymerase subunit omega.